A 497-amino-acid polypeptide reads, in one-letter code: Glutamyl-tRNA reductase (497 aa).

Residues 58 to 61, Ser-118, 123 to 125, and Gln-129 each bind substrate; these read TCNR and EQQ. The active-site Nucleophile is the Cys-59. 214–219 contacts NADP(+); it reads GAGAMA. Positions 461-477 are enriched in polar residues; sequence VTQPGQADSSAAQTAGT. Positions 461–486 are disordered; it reads VTQPGQADSSAAQTAGTSARADQIPS.

This sequence belongs to the glutamyl-tRNA reductase family. As to quaternary structure, homodimer.

The catalysed reaction is (S)-4-amino-5-oxopentanoate + tRNA(Glu) + NADP(+) = L-glutamyl-tRNA(Glu) + NADPH + H(+). It participates in porphyrin-containing compound metabolism; protoporphyrin-IX biosynthesis; 5-aminolevulinate from L-glutamyl-tRNA(Glu): step 1/2. Catalyzes the NADPH-dependent reduction of glutamyl-tRNA(Glu) to glutamate 1-semialdehyde (GSA). The chain is Glutamyl-tRNA reductase from Corynebacterium jeikeium (strain K411).